Here is a 201-residue protein sequence, read N- to C-terminus: MAHAEEPEDRMAWIEPEVRPGSLLVSSTDLTEPAFRRTVIYMIEHNDAGSLGVIVNRPSETAVQNVLPQWSPLTAHPSALYIGGPVKRDSALCLGIARNGARIDGVAGLRRVDGKVVMVDLDSDPEVIAPLVEGIRIFAGYSGWTLGQLDSELEREDWMVISSLPSDVLTPPRVDVWARVLRRQPLPVAMLASHPIEVERN.

Belongs to the UPF0301 (AlgH) family.

The polypeptide is UPF0301 protein RER_60040 (Rhodococcus erythropolis (strain PR4 / NBRC 100887)).